We begin with the raw amino-acid sequence, 496 residues long: Probable CtpA-like serine protease (496 aa).

Residues 1 to 16 (MDDKQHTSSSDDERAE) are compositionally biased toward basic and acidic residues. A disordered region spans residues 1–27 (MDDKQHTSSSDDERAEIATSNQDQETN). The segment covering 18–27 (ATSNQDQETN) has biased composition (polar residues). Residues 39-59 (FISILIGTTLITAVITVVAYI) traverse the membrane as a helical segment. The PDZ domain maps to 124–206 (TKSFNEGVSG…TEVTLTVQRG (83 aa)). Residues Ser-329, Asp-340, and Lys-354 each act as charge relay system in the active site.

This sequence belongs to the peptidase S41A family.

The protein localises to the cell membrane. The sequence is that of Probable CtpA-like serine protease from Staphylococcus aureus (strain Mu50 / ATCC 700699).